Consider the following 509-residue polypeptide: tRNA-2-methylthio-N(6)-dimethylallyladenosine synthase (509 aa).

Positions 1-15 (MNEQQRLASQQANSS) are enriched in polar residues. The tract at residues 1–25 (MNEQQRLASQQANSSTKKEEKDYSK) is disordered. The span at 16–25 (TKKEEKDYSK) shows a compositional bias: basic and acidic residues. Residues 66–184 (RKFYIRTYGC…LPYILKDAMF (119 aa)) enclose the MTTase N-terminal domain. [4Fe-4S] cluster is bound by residues cysteine 75, cysteine 111, cysteine 145, cysteine 221, cysteine 225, and cysteine 228. The Radical SAM core domain occupies 207 to 437 (RRGDIKAWVN…NTLVNTLAIE (231 aa)). The region spanning 440–503 (SRYKGQIVEV…TWSLNGELVE (64 aa)) is the TRAM domain.

Belongs to the methylthiotransferase family. MiaB subfamily. In terms of assembly, monomer. [4Fe-4S] cluster serves as cofactor.

Its subcellular location is the cytoplasm. It catalyses the reaction N(6)-dimethylallyladenosine(37) in tRNA + (sulfur carrier)-SH + AH2 + 2 S-adenosyl-L-methionine = 2-methylsulfanyl-N(6)-dimethylallyladenosine(37) in tRNA + (sulfur carrier)-H + 5'-deoxyadenosine + L-methionine + A + S-adenosyl-L-homocysteine + 2 H(+). Its function is as follows. Catalyzes the methylthiolation of N6-(dimethylallyl)adenosine (i(6)A), leading to the formation of 2-methylthio-N6-(dimethylallyl)adenosine (ms(2)i(6)A) at position 37 in tRNAs that read codons beginning with uridine. In Bacillus cereus (strain B4264), this protein is tRNA-2-methylthio-N(6)-dimethylallyladenosine synthase.